The chain runs to 1405 residues: DNA-directed RNA polymerase subunit beta' (1405 aa).

Zn(2+) contacts are provided by C70, C72, C85, and C88. Mg(2+) is bound by residues D460, D462, and D464. Zn(2+) is bound by residues C814, C888, C895, and C898.

Belongs to the RNA polymerase beta' chain family. The RNAP catalytic core consists of 2 alpha, 1 beta, 1 beta' and 1 omega subunit. When a sigma factor is associated with the core the holoenzyme is formed, which can initiate transcription. Mg(2+) is required as a cofactor. The cofactor is Zn(2+).

The enzyme catalyses RNA(n) + a ribonucleoside 5'-triphosphate = RNA(n+1) + diphosphate. Its function is as follows. DNA-dependent RNA polymerase catalyzes the transcription of DNA into RNA using the four ribonucleoside triphosphates as substrates. The polypeptide is DNA-directed RNA polymerase subunit beta' (Shewanella baltica (strain OS223)).